The following is a 526-amino-acid chain: Peptide chain release factor 3 (526 aa).

Residues 8-277 (SKRRTFAIIS…GLTRWAPAPQ (270 aa)) form the tr-type G domain. Residues 17–24 (SHPDAGKT), 85–89 (DTPGH), and 139–142 (NKLD) contribute to the GTP site.

This sequence belongs to the TRAFAC class translation factor GTPase superfamily. Classic translation factor GTPase family. PrfC subfamily.

It is found in the cytoplasm. In terms of biological role, increases the formation of ribosomal termination complexes and stimulates activities of RF-1 and RF-2. It binds guanine nucleotides and has strong preference for UGA stop codons. It may interact directly with the ribosome. The stimulation of RF-1 and RF-2 is significantly reduced by GTP and GDP, but not by GMP. This chain is Peptide chain release factor 3, found in Vibrio atlanticus (strain LGP32) (Vibrio splendidus (strain Mel32)).